Reading from the N-terminus, the 262-residue chain is Nickel import ATP-binding protein NikD (262 aa).

In terms of domain architecture, ABC transporter spans 6 to 249; that stretch reads LAIEGLTATT…PGHEVTRMLV (244 aa). 42–49 serves as a coordination point for ATP; the sequence is GASGSGKS.

This sequence belongs to the ABC transporter superfamily. Nickel importer (TC 3.A.1.5.3) family. As to quaternary structure, the complex is composed of two ATP-binding proteins (NikD and NikE), two transmembrane proteins (NikB and NikC) and a solute-binding protein (NikA).

The protein localises to the cell inner membrane. The catalysed reaction is Ni(2+)(out) + ATP + H2O = Ni(2+)(in) + ADP + phosphate + H(+). Part of the ABC transporter complex NikABCDE involved in nickel import. Responsible for energy coupling to the transport system. This Brucella abortus biovar 1 (strain 9-941) protein is Nickel import ATP-binding protein NikD.